A 491-amino-acid polypeptide reads, in one-letter code: Probable cytosol aminopeptidase (491 aa).

Mn(2+)-binding residues include K261 and D266. The active site involves K273. Mn(2+) is bound by residues D284, D343, and E345. R347 is a catalytic residue.

It belongs to the peptidase M17 family. Mn(2+) serves as cofactor.

Its subcellular location is the cytoplasm. The enzyme catalyses Release of an N-terminal amino acid, Xaa-|-Yaa-, in which Xaa is preferably Leu, but may be other amino acids including Pro although not Arg or Lys, and Yaa may be Pro. Amino acid amides and methyl esters are also readily hydrolyzed, but rates on arylamides are exceedingly low.. It catalyses the reaction Release of an N-terminal amino acid, preferentially leucine, but not glutamic or aspartic acids.. Functionally, presumably involved in the processing and regular turnover of intracellular proteins. Catalyzes the removal of unsubstituted N-terminal amino acids from various peptides. The chain is Probable cytosol aminopeptidase from Geobacter sp. (strain M21).